The chain runs to 137 residues: MRTLWIVAVLLVGVEGSMYELGKMILLETGKNAATSYIAYGCNCGVGRRGQPLDATDRCCYVHKCCYKKLTGCNPLTDRYSHSLKNKTIVCGENKPCLKEMCECDKALAICLGKNVNTYNKNYKITMKMFCKKPDAC.

The N-terminal stretch at Met1 to Gly16 is a signal peptide. Cystine bridges form between Cys42/Cys131, Cys44/Cys60, Cys59/Cys111, Cys65/Cys137, Cys66/Cys104, Cys73/Cys97, and Cys91/Cys102. Residues Lys121–Lys133 form an important for membrane-damaging activities in eukaryotes and bacteria; heparin-binding region.

The protein belongs to the phospholipase A2 family. Group II subfamily. K49 sub-subfamily. As to quaternary structure, homodimer; non-covalently linked. Expressed by the venom gland.

It is found in the secreted. In terms of biological role, snake venom phospholipase A2 that lacks enzymatic activity. Is myotoxic, and displays edema-inducing activities. A model of myotoxic mechanism has been proposed: an apo Lys49-PLA2 is activated by the entrance of a hydrophobic molecule (e.g. fatty acid) at the hydrophobic channel of the protein leading to a reorientation of a monomer. This reorientation causes a transition between 'inactive' to 'active' states, causing alignment of C-terminal and membrane-docking sites (MDoS) side-by-side and putting the membrane-disruption sites (MDiS) in the same plane, exposed to solvent and in a symmetric position for both monomers. The MDoS region stabilizes the toxin on membrane by the interaction of charged residues with phospholipid head groups. Subsequently, the MDiS region destabilizes the membrane with penetration of hydrophobic residues. This insertion causes a disorganization of the membrane, allowing an uncontrolled influx of ions (i.e. calcium and sodium), and eventually triggering irreversible intracellular alterations and cell death. This Bothriechis schlegelii (Eyelash palm pitviper) protein is Basic phospholipase A2 homolog Bsc-K49.